The primary structure comprises 151 residues: Acidic phospholipase A2 1 (151 aa).

Positions 1–21 (MNPAHLLVLSAVCVSLLGASS) are cleaved as a signal peptide. A propeptide spanning residues 22–27 (IPPQPL) is cleaved from the precursor. Intrachain disulfides connect C38–C104, C54–C151, C56–C72, C71–C132, C78–C125, C88–C118, and C111–C123. Ca(2+) contacts are provided by Y55, G57, and G59. H75 is an active-site residue. D76 provides a ligand contact to Ca(2+). Residue D126 is part of the active site.

The cofactor is Ca(2+). In terms of tissue distribution, expressed by the venom gland.

The protein resides in the secreted. It carries out the reaction a 1,2-diacyl-sn-glycero-3-phosphocholine + H2O = a 1-acyl-sn-glycero-3-phosphocholine + a fatty acid + H(+). In terms of biological role, snake venom phospholipase A2 (PLA2) that may exhibit cardiotoxicity, myotoxicity, antiplatelet activity, and edema-inducing activity. PLA2 catalyzes the calcium-dependent hydrolysis of the 2-acyl groups in 3-sn-phosphoglycerides. The chain is Acidic phospholipase A2 1 from Ophiophagus hannah (King cobra).